We begin with the raw amino-acid sequence, 439 residues long: GTPase Obg (439 aa).

Residues 1–159 (MAFVDQAQIE…RNLKLELKVL (159 aa)) form the Obg domain. An OBG-type G domain is found at 160-336 (ADVGLVGFPS…LMRLTADMLA (177 aa)). Residues 166–173 (GFPSAGKS), 191–195 (FTTLS), 213–216 (DLPG), 283–286 (TKMD), and 317–319 (SSI) contribute to the GTP site. Ser-173 and Thr-193 together coordinate Mg(2+). The segment at 338–357 (APAPESYRPETKNDTSEKSY) is disordered. Positions 344-354 (YRPETKNDTSE) are enriched in basic and acidic residues. One can recognise an OCT domain in the interval 358–439 (TFKPETHDFT…NSDFVFEFSE (82 aa)).

The protein belongs to the TRAFAC class OBG-HflX-like GTPase superfamily. OBG GTPase family. Monomer. Mg(2+) serves as cofactor.

It localises to the cytoplasm. Its function is as follows. An essential GTPase which binds GTP, GDP and possibly (p)ppGpp with moderate affinity, with high nucleotide exchange rates and a fairly low GTP hydrolysis rate. Plays a role in control of the cell cycle, stress response, ribosome biogenesis and in those bacteria that undergo differentiation, in morphogenesis control. This chain is GTPase Obg, found in Leuconostoc mesenteroides subsp. mesenteroides (strain ATCC 8293 / DSM 20343 / BCRC 11652 / CCM 1803 / JCM 6124 / NCDO 523 / NBRC 100496 / NCIMB 8023 / NCTC 12954 / NRRL B-1118 / 37Y).